A 196-amino-acid polypeptide reads, in one-letter code: ATP-dependent Clp protease proteolytic subunit (196 aa).

Catalysis depends on S101, which acts as the Nucleophile. The active site involves H126.

It belongs to the peptidase S14 family. In terms of assembly, component of the chloroplastic Clp protease core complex.

It localises to the plastid. The protein resides in the chloroplast stroma. The catalysed reaction is Hydrolysis of proteins to small peptides in the presence of ATP and magnesium. alpha-casein is the usual test substrate. In the absence of ATP, only oligopeptides shorter than five residues are hydrolyzed (such as succinyl-Leu-Tyr-|-NHMec, and Leu-Tyr-Leu-|-Tyr-Trp, in which cleavage of the -Tyr-|-Leu- and -Tyr-|-Trp bonds also occurs).. Its function is as follows. Cleaves peptides in various proteins in a process that requires ATP hydrolysis. Has a chymotrypsin-like activity. Plays a major role in the degradation of misfolded proteins. The chain is ATP-dependent Clp protease proteolytic subunit from Arabis hirsuta (Hairy rock-cress).